We begin with the raw amino-acid sequence, 103 residues long: Large ribosomal subunit protein bL21 (103 aa).

The protein belongs to the bacterial ribosomal protein bL21 family. In terms of assembly, part of the 50S ribosomal subunit. Contacts protein L20.

Functionally, this protein binds to 23S rRNA in the presence of protein L20. The protein is Large ribosomal subunit protein bL21 of Sodalis glossinidius (strain morsitans).